We begin with the raw amino-acid sequence, 374 residues long: Ribosomal RNA large subunit methyltransferase G (374 aa).

This sequence belongs to the methyltransferase superfamily. RlmG family.

The protein resides in the cytoplasm. The catalysed reaction is guanosine(1835) in 23S rRNA + S-adenosyl-L-methionine = N(2)-methylguanosine(1835) in 23S rRNA + S-adenosyl-L-homocysteine + H(+). Its function is as follows. Specifically methylates the guanine in position 1835 (m2G1835) of 23S rRNA. The chain is Ribosomal RNA large subunit methyltransferase G from Pseudomonas syringae pv. syringae (strain B728a).